The sequence spans 240 residues: Methylthioribulose-1-phosphate dehydratase (240 aa).

C99 serves as a coordination point for substrate. The Zn(2+) site is built by H116 and H118. The active-site Proton donor/acceptor is the E145. H201 is a binding site for Zn(2+).

The protein belongs to the aldolase class II family. MtnB subfamily. It depends on Zn(2+) as a cofactor.

The protein localises to the cytoplasm. It catalyses the reaction 5-(methylsulfanyl)-D-ribulose 1-phosphate = 5-methylsulfanyl-2,3-dioxopentyl phosphate + H2O. It participates in amino-acid biosynthesis; L-methionine biosynthesis via salvage pathway; L-methionine from S-methyl-5-thio-alpha-D-ribose 1-phosphate: step 2/6. Catalyzes the dehydration of methylthioribulose-1-phosphate (MTRu-1-P) into 2,3-diketo-5-methylthiopentyl-1-phosphate (DK-MTP-1-P). The protein is Methylthioribulose-1-phosphate dehydratase of Paracoccidioides brasiliensis (strain Pb03).